The primary structure comprises 161 residues: Peroxynitrite isomerase 2 (161 aa).

The GXWXGXG motif lies at 17–23 (GTWAGQG). Residue His152 participates in heme b binding.

It belongs to the nitrobindin family. Homodimer. Heme b serves as cofactor.

The catalysed reaction is peroxynitrite = nitrate. The protein operates within nitrogen metabolism. Its function is as follows. Heme-binding protein able to scavenge peroxynitrite and to protect free L-tyrosine against peroxynitrite-mediated nitration, by acting as a peroxynitrite isomerase that converts peroxynitrite to nitrate. Therefore, this protein likely plays a role in peroxynitrite sensing and in the detoxification of reactive nitrogen and oxygen species (RNS and ROS, respectively). Is able to bind nitric oxide (NO) in vitro, but may act as a sensor of peroxynitrite levels in vivo. This is Peroxynitrite isomerase 2 from Mycobacterium marinum (strain ATCC BAA-535 / M).